Here is a 173-residue protein sequence, read N- to C-terminus: Bifunctional protein PyrR (173 aa).

The PRPP-binding signature appears at 93–105; that stretch reads IILVDDVLYTGRT.

It belongs to the purine/pyrimidine phosphoribosyltransferase family. PyrR subfamily. As to quaternary structure, homodimer and homohexamer; in equilibrium.

The catalysed reaction is UMP + diphosphate = 5-phospho-alpha-D-ribose 1-diphosphate + uracil. Its function is as follows. Regulates transcriptional attenuation of the pyrimidine nucleotide (pyr) operon by binding in a uridine-dependent manner to specific sites on pyr mRNA. This disrupts an antiterminator hairpin in the RNA and favors formation of a downstream transcription terminator, leading to a reduced expression of downstream genes. In terms of biological role, also displays a weak uracil phosphoribosyltransferase activity which is not physiologically significant. This chain is Bifunctional protein PyrR, found in Streptococcus equi subsp. zooepidemicus (strain H70).